We begin with the raw amino-acid sequence, 642 residues long: Threonine--tRNA ligase (642 aa).

In terms of domain architecture, TGS spans 1 to 61 (MPIITLPDGS…SEDANLEIIT (61 aa)). The tract at residues 243–534 (DHRKIGKALD…ITEEYAGFFP (292 aa)) is catalytic. Residues Cys-334, His-385, and His-511 each coordinate Zn(2+).

It belongs to the class-II aminoacyl-tRNA synthetase family. In terms of assembly, homodimer. Zn(2+) serves as cofactor.

Its subcellular location is the cytoplasm. It catalyses the reaction tRNA(Thr) + L-threonine + ATP = L-threonyl-tRNA(Thr) + AMP + diphosphate + H(+). Its function is as follows. Catalyzes the attachment of threonine to tRNA(Thr) in a two-step reaction: L-threonine is first activated by ATP to form Thr-AMP and then transferred to the acceptor end of tRNA(Thr). Also edits incorrectly charged L-seryl-tRNA(Thr). The chain is Threonine--tRNA ligase from Histophilus somni (strain 129Pt) (Haemophilus somnus).